Here is a 145-residue protein sequence, read N- to C-terminus: Large ribosomal subunit protein uL16 (145 aa).

The protein belongs to the universal ribosomal protein uL16 family. As to quaternary structure, part of the 50S ribosomal subunit.

In terms of biological role, binds 23S rRNA and is also seen to make contacts with the A and possibly P site tRNAs. This Exiguobacterium sibiricum (strain DSM 17290 / CCUG 55495 / CIP 109462 / JCM 13490 / 255-15) protein is Large ribosomal subunit protein uL16.